Here is a 270-residue protein sequence, read N- to C-terminus: uncharacterized protein (270 aa).

Histidine 171 (proton donor) is an active-site residue. Cysteine 261 functions as the Nucleophile in the catalytic mechanism.

Belongs to the DDAH family.

This is an uncharacterized protein from Aeropyrum pernix (strain ATCC 700893 / DSM 11879 / JCM 9820 / NBRC 100138 / K1).